The following is a 330-amino-acid chain: Ketol-acid reductoisomerase (NADP(+)) (330 aa).

The KARI N-terminal Rossmann domain maps to 3-184 (LPVYYDKDID…GGGRMGVLET (182 aa)). Residues 26-29 (YGAQ), S52, and S54 contribute to the NADP(+) site. The active site involves H109. An NADP(+)-binding site is contributed by G135. Positions 185–329 (SFKEECESDL…EILRAPFNHK (145 aa)) constitute a KARI C-terminal knotted domain. Residues D193, E197, E229, and E233 each contribute to the Mg(2+) site. A substrate-binding site is contributed by S254.

Belongs to the ketol-acid reductoisomerase family. Mg(2+) is required as a cofactor.

It catalyses the reaction (2R)-2,3-dihydroxy-3-methylbutanoate + NADP(+) = (2S)-2-acetolactate + NADPH + H(+). The catalysed reaction is (2R,3R)-2,3-dihydroxy-3-methylpentanoate + NADP(+) = (S)-2-ethyl-2-hydroxy-3-oxobutanoate + NADPH + H(+). It participates in amino-acid biosynthesis; L-isoleucine biosynthesis; L-isoleucine from 2-oxobutanoate: step 2/4. Its pathway is amino-acid biosynthesis; L-valine biosynthesis; L-valine from pyruvate: step 2/4. Functionally, involved in the biosynthesis of branched-chain amino acids (BCAA). Catalyzes an alkyl-migration followed by a ketol-acid reduction of (S)-2-acetolactate (S2AL) to yield (R)-2,3-dihydroxy-isovalerate. In the isomerase reaction, S2AL is rearranged via a Mg-dependent methyl migration to produce 3-hydroxy-3-methyl-2-ketobutyrate (HMKB). In the reductase reaction, this 2-ketoacid undergoes a metal-dependent reduction by NADPH to yield (R)-2,3-dihydroxy-isovalerate. The sequence is that of Ketol-acid reductoisomerase (NADP(+)) from Helicobacter pylori (strain Shi470).